Here is a 509-residue protein sequence, read N- to C-terminus: 2,3-bisphosphoglycerate-independent phosphoglycerate mutase (509 aa).

Residues aspartate 12 and serine 62 each contribute to the Mn(2+) site. Residue serine 62 is the Phosphoserine intermediate of the active site. Substrate contacts are provided by residues histidine 123, 153-154 (RD), arginine 185, arginine 191, 260-263 (RPDR), and lysine 333. Residues aspartate 400, histidine 404, aspartate 441, histidine 442, and histidine 460 each contribute to the Mn(2+) site.

Belongs to the BPG-independent phosphoglycerate mutase family. In terms of assembly, monomer. Mn(2+) is required as a cofactor.

The enzyme catalyses (2R)-2-phosphoglycerate = (2R)-3-phosphoglycerate. Its pathway is carbohydrate degradation; glycolysis; pyruvate from D-glyceraldehyde 3-phosphate: step 3/5. In terms of biological role, catalyzes the interconversion of 2-phosphoglycerate and 3-phosphoglycerate. The sequence is that of 2,3-bisphosphoglycerate-independent phosphoglycerate mutase from Clostridium kluyveri (strain ATCC 8527 / DSM 555 / NBRC 12016 / NCIMB 10680 / K1).